Consider the following 444-residue polypeptide: Glutamate-1-semialdehyde 2,1-aminomutase (444 aa).

An N6-(pyridoxal phosphate)lysine modification is found at Lys278.

The protein belongs to the class-III pyridoxal-phosphate-dependent aminotransferase family. HemL subfamily. In terms of assembly, homodimer. Pyridoxal 5'-phosphate is required as a cofactor.

It is found in the cytoplasm. The enzyme catalyses (S)-4-amino-5-oxopentanoate = 5-aminolevulinate. It participates in porphyrin-containing compound metabolism; protoporphyrin-IX biosynthesis; 5-aminolevulinate from L-glutamyl-tRNA(Glu): step 2/2. The protein is Glutamate-1-semialdehyde 2,1-aminomutase of Deinococcus radiodurans (strain ATCC 13939 / DSM 20539 / JCM 16871 / CCUG 27074 / LMG 4051 / NBRC 15346 / NCIMB 9279 / VKM B-1422 / R1).